A 257-amino-acid chain; its full sequence is uncharacterized protein (257 aa).

A helical transmembrane segment spans residues 6 to 26; it reads IFWLNLAAIIIISIVVSGGMF.

The protein belongs to the staphylococcal tandem lipoprotein family.

Its subcellular location is the cell membrane. This is an uncharacterized protein from Staphylococcus aureus (strain Mu50 / ATCC 700699).